The chain runs to 503 residues: Aminoaldehyde dehydrogenase 1, peroxisomal (503 aa).

4 residues coordinate Na(+): Asn-27, Ile-28, Asp-99, and Leu-189. 238–245 (GSSATGSK) provides a ligand contact to NAD(+). Glu-260 functions as the Proton acceptor in the catalytic mechanism. Positions 294 and 393 each coordinate NAD(+). The active-site Nucleophile is Cys-294. The Microbody targeting signal motif lies at 501–503 (SKL).

Belongs to the aldehyde dehydrogenase family. As to quaternary structure, forms homodimers.

Its subcellular location is the peroxisome. The enzyme catalyses 3-aminopropanal + NAD(+) + H2O = beta-alanine + NADH + 2 H(+). It catalyses the reaction 4-aminobutanal + NAD(+) + H2O = 4-aminobutanoate + NADH + 2 H(+). The catalysed reaction is 4-guanidinobutanal + NAD(+) + H2O = 4-guanidinobutanoate + NADH + 2 H(+). It functions in the pathway amine and polyamine biosynthesis; betaine biosynthesis via choline pathway; betaine from betaine aldehyde: step 1/1. Functionally, dehydrogenase that catalyzes the oxidation of several aminoaldehydes. Metabolizes and detoxifies aldehyde products of polyamine degradation to non-toxic amino acids. Catalyzes the oxidation of 3-aminopropanal to beta-alanine. Catalyzes the oxidation of 4-aminobutanal to 4-aminobutanoate. Catalyzes the oxidation of 4-guanidinobutanal to 4-guanidinobutanoate. The sequence is that of Aminoaldehyde dehydrogenase 1, peroxisomal from Pisum sativum (Garden pea).